An 881-amino-acid chain; its full sequence is Putative SWI/SNF-related matrix-associated actin-dependent regulator of chromatin subfamily A member 3-like 1 (881 aa).

Residues 272–486 enclose the Helicase ATP-binding domain; the sequence is DKRPDPLRGG…YSLMAFLRFE (215 aa). 285–292 is an ATP binding site; it reads DDMGLGKT. A disordered region spans residues 308-343; that stretch reads STSTPTEEPLDGEGDKIEKKGKKRGRGKSSESVTRK. The short motif at 437-440 is the DEAH box element; sequence DEAH. The segment at 635-674 adopts an RING-type zinc-finger fold; sequence CPICISPPTNIIITRCAHIFCRACILQTLQRSKPLCPLCR. The tract at residues 681–703 is disordered; it reads DLYNAPPPPPDSSNTDGEDAKSS. One can recognise a Helicase C-terminal domain in the interval 711–876; sequence ALLSLLMASR…EREVNVEDVV (166 aa).

Belongs to the SNF2/RAD54 helicase family. RAD16 subfamily.

It is found in the nucleus. Its function is as follows. Possesses intrinsic ATP-dependent nucleosome-remodeling activity. This activity may be required for transcriptional activation or repression of specific target promoters. This Arabidopsis thaliana (Mouse-ear cress) protein is Putative SWI/SNF-related matrix-associated actin-dependent regulator of chromatin subfamily A member 3-like 1.